A 330-amino-acid chain; its full sequence is Inactive hydroxysteroid dehydrogenase-like protein 1 (330 aa).

The residue at position 2 (A2) is an N-acetylalanine. The interval 2-82 (AAVDSFYLLY…SGATDGIGKA (81 aa)) is required for mitochondria translocation. Residues 74–80 (GATDGIG), D125, and K222 contribute to the NADP(+) site.

It belongs to the short-chain dehydrogenases/reductases (SDR) family. 17-beta-HSD 3 subfamily. In terms of assembly, interacts with STYXL1.

It localises to the mitochondrion. This chain is Inactive hydroxysteroid dehydrogenase-like protein 1 (Hsdl1), found in Mus musculus (Mouse).